Reading from the N-terminus, the 355-residue chain is Glutamine synthetase root isozyme 4 (355 aa).

The GS beta-grasp domain occupies 19 to 99 (IIAEYIWIGG…VMCDCYTPAG (81 aa)). Residues 37 to 66 (ARTLPGPVTDPSKLPKWNYDGSSTGQAPGE) form a disordered region. Positions 106-355 (KRYSAAKIFS…IAETTIVWKP (250 aa)) constitute a GS catalytic domain.

The protein belongs to the glutamine synthetase family. Homooctamer. In terms of tissue distribution, found in all the tissues examined with higher expression found in tissues of the root, stem and seedling shoot.

The protein resides in the cytoplasm. The catalysed reaction is L-glutamate + NH4(+) + ATP = L-glutamine + ADP + phosphate + H(+). Its function is as follows. Plays a role in the flow of nitrogen into nitrogenous organic compounds. The polypeptide is Glutamine synthetase root isozyme 4 (GLN5) (Zea mays (Maize)).